A 360-amino-acid chain; its full sequence is Phospho-N-acetylmuramoyl-pentapeptide-transferase (360 aa).

10 consecutive transmembrane segments (helical) span residues 20 to 40, 71 to 91, 93 to 113, 134 to 154, 168 to 188, 199 to 219, 239 to 259, 263 to 283, 288 to 308, and 337 to 357; these read YITF…FFFG, TPTM…LLWA, LDNG…AIGF, LLIG…LHPA, ALIN…LGAA, GLAI…AYMV, LAVF…YNAP, VFMG…IAVV, IVLA…IIQV, and QIVI…LATL.

The protein belongs to the glycosyltransferase 4 family. MraY subfamily. Requires Mg(2+) as cofactor.

The protein resides in the cell inner membrane. The catalysed reaction is UDP-N-acetyl-alpha-D-muramoyl-L-alanyl-gamma-D-glutamyl-meso-2,6-diaminopimeloyl-D-alanyl-D-alanine + di-trans,octa-cis-undecaprenyl phosphate = di-trans,octa-cis-undecaprenyl diphospho-N-acetyl-alpha-D-muramoyl-L-alanyl-D-glutamyl-meso-2,6-diaminopimeloyl-D-alanyl-D-alanine + UMP. Its pathway is cell wall biogenesis; peptidoglycan biosynthesis. Its function is as follows. Catalyzes the initial step of the lipid cycle reactions in the biosynthesis of the cell wall peptidoglycan: transfers peptidoglycan precursor phospho-MurNAc-pentapeptide from UDP-MurNAc-pentapeptide onto the lipid carrier undecaprenyl phosphate, yielding undecaprenyl-pyrophosphoryl-MurNAc-pentapeptide, known as lipid I. This Paracoccus denitrificans (strain Pd 1222) protein is Phospho-N-acetylmuramoyl-pentapeptide-transferase.